A 377-amino-acid polypeptide reads, in one-letter code: Adaptive-response sensory kinase SasA (377 aa).

The Histidine kinase domain maps to 154–373; it reads MLVHDLRSPL…SFHFTLPVYR (220 aa). Histidine 157 carries the phosphohistidine; by autocatalysis modification.

Homooligomerizes. Interacts with KaiC. Participates in the KaiABC clock complex, whose core is composed of a KaiC homohexamer, 6 KaiB and up to 6 KaiA dimers. SasA and KaiB(fs) compete to bind to KaiC.

It catalyses the reaction ATP + protein L-histidine = ADP + protein N-phospho-L-histidine.. Functionally, member of the two-component regulatory system SasA/RpaA involved in genome-wide circadian gene expression. One of several clock output pathways. Participates in the Kai clock protein complex, the main circadian regulator in cyanobacteria, via its interaction with KaiC. KaiC enhances the autophosphorylation activity of SasA, which then transfers its phosphate group to RpaA to activate it. In addition to its output function, recruits fold-shifted KaiB (KaiB(fs)) to KaiC to cooperatively form the KaiB(6):KaiC(6) complex (independent of SasA kinase activity). Required for robustness of the circadian rhythm of gene expression and is involved in clock output, also required for adaptation to light/dark cycles. This is Adaptive-response sensory kinase SasA from Synechococcus sp. (strain JA-2-3B'a(2-13)) (Cyanobacteria bacterium Yellowstone B-Prime).